The sequence spans 700 residues: MAKITKTFQYGKHTVTLETGEVARQASGAVIVKMDDTVLLVTVVAAKTAREGQDFFPLTVDYQEKFYAGGRIPGSFFKREGRATEKETLISRLIDRPIRPLFPEDYKNEVQIIAMVMSLDPEIDGDIPAMIGASAALSLAGIPFKGPIGAAKVGYNDGQYILNPTVSELKKSQLELVVAGTANAVLMVESEAALLSEEVMLGAVIFGHREMQKVIQVIDSLTAEAGTEPSDWVPPAKNDALVIALKEVIGGRLSDAFHIREKLQRRDAIAAVKDDVIQQLAGRLEVEGWNLAELLKEFGELEYRTMRDALLDTKVRIDGRSLEAVRPITVKVGVLPRVHGSGLFTRGETQAIVVTTLGTARDGQVIDAVTGEYKENFLFHYNFPPYSVGECGRFGVQKRREIGHGRLARRGVLAVMPSLDEFPYTIRVVSEITESNGSSSMASVCGSSLALMDAGVPVKAPVAGIAMGLVKEGERFVVLSDILGDEDHLGDMDFKVAGTSEGVSALQMDIKIEGITEEIMRQALQQAKVGRLHILGEMDKALAAPRAELSDYAPRLLTIKIHPDKIRDVIGKGGSTIQAITKDTGTQIDIQDDGTIVIASVNNAAAREAKRRIEQITSDVEPGRIYEGKVAKIMDFGAFVTILPGKDGLVHVSQISSERVERVGDKLKEGDVVRVKVLEVDKQGRIRLSIKAVEEEVASI.

The Mg(2+) site is built by D487 and D493. Residues 554–613 (PRLLTIKIHPDKIRDVIGKGGSTIQAITKDTGTQIDIQDDGTIVIASVNNAAAREAKRRI) enclose the KH domain. The S1 motif domain occupies 623 to 691 (GRIYEGKVAK…KQGRIRLSIK (69 aa)).

The protein belongs to the polyribonucleotide nucleotidyltransferase family. In terms of assembly, component of the RNA degradosome, which is a multiprotein complex involved in RNA processing and mRNA degradation. It depends on Mg(2+) as a cofactor.

It is found in the cytoplasm. It carries out the reaction RNA(n+1) + phosphate = RNA(n) + a ribonucleoside 5'-diphosphate. Functionally, involved in mRNA degradation. Catalyzes the phosphorolysis of single-stranded polyribonucleotides processively in the 3'- to 5'-direction. This Xylella fastidiosa (strain M12) protein is Polyribonucleotide nucleotidyltransferase.